Here is a 933-residue protein sequence, read N- to C-terminus: Progesterone receptor (933 aa).

The segment at 1-164 (MTELKAKGPR…PATQGVLSPL (164 aa)) is AF3; mediates transcriptional activation. Positions 1-256 (MTELKAKGPR…AAAGGGAAAV (256 aa)) are disordered. Positions 1 to 566 (MTELKAKGPR…YSFESLPQKI (566 aa)) are modulating, Pro-Rich. Phosphoserine is present on S20. Positions 55-59 (LDGLL) match the LXXL motif 1 motif. Phosphoserine is present on S81. The LXXL motif 2 motif lies at 115 to 119 (LETLL). 2 positions are modified to phosphoserine: S130 and S162. A mediates transcriptional transrepression region spans residues 165–305 (MSRSGGKAGD…LATTVMDFIH (141 aa)). The short motif at 183–187 (KVLPR) is the Nuclear localization signal element. S190 and S213 each carry phosphoserine. Over residues 220–231 (EVEEEDGSESEE) the composition is skewed to acidic residues. Residues 232–246 (SAGPLLKGKPRALGG) show a composition bias toward low complexity. S294 carries the post-translational modification Phosphoserine; by MAPK1. Residues 331-378 (GGAGAASAFAPPRSSPSASSTPVAVGDFPDCAYPPDAEPKDDAYPLYS) form a disordered region. A compositionally biased stretch (low complexity) spans 335–350 (AASAFAPPRSSPSASS). S345 is subject to Phosphoserine; by MAPK. Residue K388 forms a Glycyl lysine isopeptide (Lys-Gly) (interchain with G-Cter in SUMO); alternate linkage. A Glycyl lysine isopeptide (Lys-Gly) (interchain with G-Cter in ubiquitin); alternate cross-link involves residue K388. Position 400 is a phosphoserine; by CDK2 (S400). Residues 415-452 (PDFPLGPPPPLPPRAPPSRPGEAAVTAAPASASVSSAS) form a disordered region. Positions 418-433 (PLGPPPPLPPRAPPSR) are enriched in pro residues. The span at 434–452 (PGEAAVTAAPASASVSSAS) shows a compositional bias: low complexity. The AF1; mediates transcriptional activation stretch occupies residues 456–546 (STLECILYKA…VYPPYLNYLR (91 aa)). K531 is covalently cross-linked (Glycyl lysine isopeptide (Lys-Gly) (interchain with G-Cter in SUMO)). NR C4-type zinc fingers lie at residues 567–587 (CLICGDEASGCHYGVLTCGSC) and 603–627 (CAGRNDCIVDKIRRKNCPACRLRKC). Residues 567-639 (CLICGDEASG…AGMVLGGRKF (73 aa)) constitute a DNA-binding region (nuclear receptor). S676 bears the Phosphoserine mark. In terms of domain architecture, NR LBD spans 679 to 913 (QDIQLIPPLI…EFPEMMSEVI (235 aa)). Positions 687 to 933 (LINLLMSIEP…MVKPLLFHKK (247 aa)) are AF2; mediates transcriptional activation. R766 serves as a coordination point for progesterone.

It belongs to the nuclear hormone receptor family. As to quaternary structure, interacts with SMARD1 and UNC45A. Interacts with CUEDC2; the interaction promotes ubiquitination, decreases sumoylation, and represses transcriptional activity. Interacts with PIAS3; the interaction promotes sumoylation of PR in a hormone-dependent manner, inhibits DNA-binding, and alters nuclear export. Interacts with SP1; the interaction requires ligand-induced phosphorylation on Ser-345 by ERK1/2-MAPK. Interacts with PRMT2. Interacts with NCOA2 and NCOA1. Interacts with KLF9. Interacts with GTF2B. In terms of processing, phosphorylated on multiple serine sites. Several of these sites are hormone-dependent. Phosphorylation on Ser-294 is highly hormone-dependent and modulates ubiquitination and sumoylation on Lys-388. Phosphorylation on Ser-102 and Ser-345 also requires induction by hormone. Basal phosphorylation on Ser-81, Ser-162, Ser-190 and Ser-400 is increased in response to progesterone and can be phosphorylated in vitro by the CDK2-A1 complex. Increased levels of phosphorylation on Ser-400 also in the presence of EGF, heregulin, IGF, PMA and FBS. Phosphorylation at this site by CDK2 is ligand-independent, and increases nuclear translocation and transcriptional activity. Phosphorylation at Ser-162 and Ser-294, but not at Ser-190, is impaired during the G(2)/M phase of the cell cycle. Phosphorylation on Ser-345 by ERK1/2 MAPK is required for interaction with SP1. Post-translationally, sumoylation is hormone-dependent and represses transcriptional activity. Sumoylation on all three sites is enhanced by PIAS3. Desumoylated by SENP1. Sumoylation on Lys-388, the main site of sumoylation, is repressed by ubiquitination on the same site, and modulated by phosphorylation at Ser-294. Ubiquitination is hormone-dependent and represses sumoylation on the same site. Promoted by MAPK-mediated phosphorylation on Ser-294. Ubiquitinated by UBR5, leading to its degradation: UBR5 specifically recognizes and binds ligand-bound PGR when it is not associated with coactivators (NCOAs). In presence of NCOAs, the UBR5-degron is not accessible, preventing its ubiquitination and degradation. In terms of processing, palmitoylated by ZDHHC7 and ZDHHC21. Palmitoylation is required for plasma membrane targeting and for rapid intracellular signaling via ERK and AKT kinases and cAMP generation.

The protein resides in the nucleus. The protein localises to the cytoplasm. Functionally, the steroid hormones and their receptors are involved in the regulation of eukaryotic gene expression and affect cellular proliferation and differentiation in target tissues. Transcriptional activator of several progesteron-dependent promoters in a variety of cell types. Involved in activation of SRC-dependent MAPK signaling on hormone stimulation. The polypeptide is Progesterone receptor (PGR) (Gorilla gorilla gorilla (Western lowland gorilla)).